Consider the following 230-residue polypeptide: Osmotin-like protein PR-5x (230 aa).

Positions 1–25 (MYTNMGYLTSSFIFFFLALVTYTYA) are cleaved as a signal peptide. Disulfide bonds link C34/C229, C76/C86, C91/C97, C145/C217, C150/C200, C158/C168, C172/C181, and C182/C187.

This sequence belongs to the thaumatin family.

Its subcellular location is the secreted. It localises to the vacuole. The enzyme catalyses Endohydrolysis of (1-&gt;3)- or (1-&gt;4)-linkages in beta-D-glucans when the glucose residue whose reducing group is involved in the linkage to be hydrolyzed is itself substituted at C-3.. Its function is as follows. Antifungal protein. May bind to beta-glucans and have beta-1,3-D-glucanase activity. The protein is Osmotin-like protein PR-5x of Solanum lycopersicum (Tomato).